Consider the following 437-residue polypeptide: MANDYVSTVLLLLSLLIFLSQRTDSASIVKSLPGFDGPLPFELETGYIGVGEEEEVQLFYYFIKSERNPQEDPLLLWLSGGPGCSSISGLLYENGPVNVKIEVYNGTLPSLVSTTYSWTKVSSIIYLDQPVGTGFSYSRTKLVNKPSDSGEAKRIHEFLHKWLGKHQEFSSNPFYVGGDSYCGMVIPALVQEISKGNYVCCKPPINLQGYILGNPSTENEVDINYRIPYAHGMALISDELYESMKRICKGKYENVDPRNTKCLKLVGEYQKCTKRINKALIITPECVDTSPDCYMYRYLLTTYWANDENVQRALHVNKGSIGEWVRCYFEIPYNHDIKSSVPYHMNNSIDGYASLIFSGDHDMEVPYLGTQAWIRSLNYSLIDDWRPWMIGDQIAGYTRTYANKMAFATIKGGGHTPEYKPEESYIMFQRWISGQPL.

The first 25 residues, 1–25 (MANDYVSTVLLLLSLLIFLSQRTDS), serve as a signal peptide directing secretion. Disulfide bonds link C84-C327, C248-C262, and C286-C293. Residue N105 is glycosylated (N-linked (GlcNAc...) asparagine). S180 is an active-site residue. A glycan (N-linked (GlcNAc...) asparagine) is linked at N346. The active site involves D362. N378 carries an N-linked (GlcNAc...) asparagine glycan. H415 is a catalytic residue.

Belongs to the peptidase S10 family. As to expression, ubiquitous.

The protein localises to the secreted. Its function is as follows. Probable carboxypeptidase. The protein is Serine carboxypeptidase-like 7 (SCPL7) of Arabidopsis thaliana (Mouse-ear cress).